Here is a 778-residue protein sequence, read N- to C-terminus: Endonuclease MutS2 (778 aa).

Residue 328 to 335 (GPNTGGKT) coordinates ATP. Residues 703 to 778 (LDLRGKRYEE…GSGCTIANLG (76 aa)) enclose the Smr domain.

This sequence belongs to the DNA mismatch repair MutS family. MutS2 subfamily. In terms of assembly, homodimer. Binds to stalled ribosomes, contacting rRNA.

Endonuclease that is involved in the suppression of homologous recombination and thus may have a key role in the control of bacterial genetic diversity. Its function is as follows. Acts as a ribosome collision sensor, splitting the ribosome into its 2 subunits. Detects stalled/collided 70S ribosomes which it binds and splits by an ATP-hydrolysis driven conformational change. Acts upstream of the ribosome quality control system (RQC), a ribosome-associated complex that mediates the extraction of incompletely synthesized nascent chains from stalled ribosomes and their subsequent degradation. Probably generates substrates for RQC. The polypeptide is Endonuclease MutS2 (Streptococcus equi subsp. equi (strain 4047)).